The following is a 139-amino-acid chain: Cystatin (139 aa).

Residues 1–23 (MAGARGCVVLLAAALMLVGAVLG) form the signal peptide. The Secondary area of contact motif lies at 76–80 (QLVSG). 2 disulfide bridges follow: Cys94–Cys104 and Cys118–Cys138. Residue Ser103 is modified to Phosphoserine.

It belongs to the cystatin family.

It is found in the secreted. Its function is as follows. This protein binds tightly to and inhibits a variety of thiol proteases including ficin, papain, and cathepsins B, C, H, and L. Although isolated from egg white, it is also present in serum. This is Cystatin from Gallus gallus (Chicken).